The chain runs to 439 residues: UPF0489 protein C5orf22 homolog (439 aa).

The disordered stretch occupies residues 163–219; sequence TTKLENGQSGAKIPKAAQTQDDMQSKADTPCTSSSQPPDGSAASGNISETAKKKADD. The span at 179–211 shows a compositional bias: polar residues; sequence AQTQDDMQSKADTPCTSSSQPPDGSAASGNISE.

This sequence belongs to the UPF0489 family.

This is UPF0489 protein C5orf22 homolog from Danio rerio (Zebrafish).